Here is a 189-residue protein sequence, read N- to C-terminus: Apolipoprotein D (189 aa).

The signal sequence occupies residues 1–20 (MVTMLMFLATLAGLFTTAKG). Residue Q21 is modified to Pyrrolidone carboxylic acid. 2 cysteine pairs are disulfide-bonded: C28-C134 and C61-C185. Residues N65 and N98 are each glycosylated (N-linked (GlcNAc...) asparagine).

This sequence belongs to the calycin superfamily. Lipocalin family. In terms of assembly, homodimer. In terms of tissue distribution, highest levels of expression in brain, testis, virgin mammary gland and salivary gland. Moderate levels in skeletal muscle, lactating mammary gland and thymus. Low levels in lung and lymph node. No expression in kidney, pancreas, liver or spleen.

The protein resides in the secreted. Its function is as follows. APOD occurs in the macromolecular complex with lecithin-transport and binding of bilin. Appears to be able to transport a variety of ligands in a number of different contexts. This chain is Apolipoprotein D (Apod), found in Mus musculus (Mouse).